Here is a 226-residue protein sequence, read N- to C-terminus: Ribose-5-phosphate isomerase A (226 aa).

Residues 32 to 35 (TGST), 85 to 88 (DGAD), and 98 to 101 (KGGG) each bind substrate. Glu107 acts as the Proton acceptor in catalysis. Substrate is bound at residue Lys125.

It belongs to the ribose 5-phosphate isomerase family. As to quaternary structure, homodimer.

It carries out the reaction aldehydo-D-ribose 5-phosphate = D-ribulose 5-phosphate. It functions in the pathway carbohydrate degradation; pentose phosphate pathway; D-ribose 5-phosphate from D-ribulose 5-phosphate (non-oxidative stage): step 1/1. Its function is as follows. Catalyzes the reversible conversion of ribose-5-phosphate to ribulose 5-phosphate. This is Ribose-5-phosphate isomerase A from Saccharophagus degradans (strain 2-40 / ATCC 43961 / DSM 17024).